A 542-amino-acid chain; its full sequence is Protein phosphatase 1G (542 aa).

A lipid anchor (N-myristoyl glycine) is attached at G2. R22 bears the Omega-N-methylarginine mark. Positions 26-502 (PYGFSAMQGW…DNMTCIIICF (477 aa)) constitute a PPM-type phosphatase domain. Residues D60 and G61 each contribute to the Mn(2+) site. Disordered stretches follow at residues 118–139 (AGRP…DVDN) and 162–325 (QNCQ…SDSG). Residue T122 is modified to Phosphothreonine. Acidic residues-rich tracts occupy residues 123 to 139 (EDED…DVDN) and 259 to 309 (DSED…DEEM). K380 carries the N6-acetyllysine modification. Residues D438 and D493 each contribute to the Mn(2+) site. The interval 510–542 (LQPESGKRKLEEALSTEGAEENGNSDKKKAKRD) is disordered. The residue at position 524 (S524) is a Phosphoserine.

The protein belongs to the PP2C family. Interacts with NOL3; may dephosphorylate NOL3. Requires Mg(2+) as cofactor. It depends on Mn(2+) as a cofactor.

It localises to the cytoplasm. The protein resides in the membrane. It catalyses the reaction O-phospho-L-seryl-[protein] + H2O = L-seryl-[protein] + phosphate. The catalysed reaction is O-phospho-L-threonyl-[protein] + H2O = L-threonyl-[protein] + phosphate. The protein is Protein phosphatase 1G of Rattus norvegicus (Rat).